Consider the following 138-residue polypeptide: ATP synthase epsilon chain (138 aa).

The protein belongs to the ATPase epsilon chain family. As to quaternary structure, F-type ATPases have 2 components, CF(1) - the catalytic core - and CF(0) - the membrane proton channel. CF(1) has five subunits: alpha(3), beta(3), gamma(1), delta(1), epsilon(1). CF(0) has three main subunits: a, b and c.

It is found in the cell membrane. Produces ATP from ADP in the presence of a proton gradient across the membrane. This Streptococcus pyogenes serotype M2 (strain MGAS10270) protein is ATP synthase epsilon chain.